A 382-amino-acid chain; its full sequence is Carbamoyl phosphate synthase small chain (382 aa).

The CPSase stretch occupies residues 1-189 (MIKSALLVLE…GLPEAKKEDE (189 aa)). L-glutamine contacts are provided by S47, G241, and G243. The Glutamine amidotransferase type-1 domain maps to 193–380 (HVVAYDFGAK…IALIEQYRKT (188 aa)). The Nucleophile role is filled by C269. Residues L270, Q273, N311, G313, and F314 each coordinate L-glutamine. Active-site residues include H353 and E355.

Belongs to the CarA family. As to quaternary structure, composed of two chains; the small (or glutamine) chain promotes the hydrolysis of glutamine to ammonia, which is used by the large (or ammonia) chain to synthesize carbamoyl phosphate. Tetramer of heterodimers (alpha,beta)4.

The enzyme catalyses hydrogencarbonate + L-glutamine + 2 ATP + H2O = carbamoyl phosphate + L-glutamate + 2 ADP + phosphate + 2 H(+). The catalysed reaction is L-glutamine + H2O = L-glutamate + NH4(+). The protein operates within amino-acid biosynthesis; L-arginine biosynthesis; carbamoyl phosphate from bicarbonate: step 1/1. It functions in the pathway pyrimidine metabolism; UMP biosynthesis via de novo pathway; (S)-dihydroorotate from bicarbonate: step 1/3. Functionally, small subunit of the glutamine-dependent carbamoyl phosphate synthetase (CPSase). CPSase catalyzes the formation of carbamoyl phosphate from the ammonia moiety of glutamine, carbonate, and phosphate donated by ATP, constituting the first step of 2 biosynthetic pathways, one leading to arginine and/or urea and the other to pyrimidine nucleotides. The small subunit (glutamine amidotransferase) binds and cleaves glutamine to supply the large subunit with the substrate ammonia. The sequence is that of Carbamoyl phosphate synthase small chain from Escherichia coli O6:H1 (strain CFT073 / ATCC 700928 / UPEC).